Reading from the N-terminus, the 323-residue chain is Phosphopantothenate--cysteine ligase 2 (323 aa).

This sequence belongs to the PPC synthetase family. Homodimer.

The enzyme catalyses (R)-4'-phosphopantothenate + L-cysteine + CTP = N-[(R)-4-phosphopantothenoyl]-L-cysteine + CMP + diphosphate + H(+). It participates in cofactor biosynthesis; coenzyme A biosynthesis; CoA from (R)-pantothenate: step 2/5. Functionally, catalyzes the first step in the biosynthesis of coenzyme A from vitamin B5, where cysteine is conjugated to 4'-phosphopantothenate to form 4-phosphopantothenoylcysteine. This chain is Phosphopantothenate--cysteine ligase 2, found in Oryza sativa subsp. japonica (Rice).